The chain runs to 122 residues: 5'-AMP-activated protein kinase subunit beta-1 (122 aa).

A phosphoserine mark is found at S5, S61, S66, and S73. Residues 33-122 are glycogen-binding domain; it reads EVNDKASAQA…TVNNIIQVKK (90 aa). At T113 the chain carries Phosphothreonine.

The protein belongs to the 5'-AMP-activated protein kinase beta subunit family. In terms of assembly, AMPK is a heterotrimer of an alpha catalytic subunit (PRKAA1 or PRKAA2), a beta (PRKAB1 or PRKAB2) and a gamma non-catalytic subunits (PRKAG1, PRKAG2 or PRKAG3). Interacts with FNIP1 and FNIP2. In terms of processing, phosphorylated when associated with the catalytic subunit (PRKAA1 or PRKAA2). Phosphorylated by ULK1; leading to negatively regulate AMPK activity and suggesting the existence of a regulatory feedback loop between ULK1 and AMPK.

Functionally, non-catalytic subunit of AMP-activated protein kinase (AMPK), an energy sensor protein kinase that plays a key role in regulating cellular energy metabolism. In response to reduction of intracellular ATP levels, AMPK activates energy-producing pathways and inhibits energy-consuming processes: inhibits protein, carbohydrate and lipid biosynthesis, as well as cell growth and proliferation. AMPK acts via direct phosphorylation of metabolic enzymes, and by longer-term effects via phosphorylation of transcription regulators. Also acts as a regulator of cellular polarity by remodeling the actin cytoskeleton; probably by indirectly activating myosin. Beta non-catalytic subunit acts as a scaffold on which the AMPK complex assembles, via its C-terminus that bridges alpha (PRKAA1 or PRKAA2) and gamma subunits (PRKAG1, PRKAG2 or PRKAG3). In Sus scrofa (Pig), this protein is 5'-AMP-activated protein kinase subunit beta-1 (PRKAB1).